We begin with the raw amino-acid sequence, 275 residues long: MFSRRIQVLSPFLKHFVNRNARMMATEANISATSANPQSQGENLKTFEIYRWNPEKPEVKPKLQKYTVDLTKCGPMVLDALIKIKNEQDPTLTFRRSCREGICGSCAMNINGSNTLACICNIKKDNKPTKIYPLPHCFIVKDLVPDLTYFYKQYKSIEPWLQNDNIPKDKEFYQSRADRAKLDGLYECILCACCSTSCPSYWWNSEEYLGPAVLMQAYRWIIDSRDQATAKRLDVMQNSMSVYRCHTIMNCARTCPKGLNPGLAIAKVKALMATA.

A mitochondrion-targeting transit peptide spans 1–24 (MFSRRIQVLSPFLKHFVNRNARMM). The 2Fe-2S ferredoxin-type domain occupies 57-137 (PEVKPKLQKY…PTKIYPLPHC (81 aa)). The [2Fe-2S] cluster site is built by cysteine 98, cysteine 103, cysteine 106, and cysteine 118. A 4Fe-4S ferredoxin-type domain is found at 178–208 (DRAKLDGLYECILCACCSTSCPSYWWNSEEY). 3 residues coordinate [4Fe-4S] cluster: cysteine 188, cysteine 191, and cysteine 194. Cysteine 198 is a [3Fe-4S] cluster binding site. Tryptophan 203 contributes to the a ubiquinone binding site. [3Fe-4S] cluster-binding residues include cysteine 245 and cysteine 251. Cysteine 255 contacts [4Fe-4S] cluster.

The protein belongs to the succinate dehydrogenase/fumarate reductase iron-sulfur protein family. As to quaternary structure, component of complex II composed of four subunits: a flavoprotein (FP), an iron-sulfur protein (IP), and a cytochrome b composed of a large and a small subunit. Requires [2Fe-2S] cluster as cofactor. The cofactor is [3Fe-4S] cluster. [4Fe-4S] cluster serves as cofactor.

The protein localises to the mitochondrion inner membrane. The catalysed reaction is a quinone + succinate = fumarate + a quinol. It participates in carbohydrate metabolism; tricarboxylic acid cycle; fumarate from succinate (eukaryal route): step 1/1. Iron-sulfur protein (IP) subunit of succinate dehydrogenase (SDH) that is involved in complex II of the mitochondrial electron transport chain and is responsible for transferring electrons from succinate to ubiquinone (coenzyme Q). This is Succinate dehydrogenase [ubiquinone] iron-sulfur subunit, mitochondrial (sdh2) from Schizosaccharomyces pombe (strain 972 / ATCC 24843) (Fission yeast).